A 340-amino-acid polypeptide reads, in one-letter code: Holliday junction branch migration complex subunit RuvB (340 aa).

The tract at residues 1 to 184 is large ATPase domain (RuvB-L); that stretch reads MNENLDPTTK…FGISSRLQYY (184 aa). Residues Leu-23, Arg-24, Gly-65, Lys-68, Thr-69, Thr-70, 131–133, Arg-174, Tyr-184, and Arg-221 contribute to the ATP site; that span reads EDF. Mg(2+) is bound at residue Thr-69. Residues 185-255 are small ATPAse domain (RuvB-S); that stretch reads STELLTTIVE…ISKYALKALN (71 aa). Positions 258–340 are head domain (RuvB-H); it reads AHGLDEMDNK…INTNIQGGLF (83 aa). Positions 313 and 318 each coordinate DNA.

The protein belongs to the RuvB family. As to quaternary structure, homohexamer. Forms an RuvA(8)-RuvB(12)-Holliday junction (HJ) complex. HJ DNA is sandwiched between 2 RuvA tetramers; dsDNA enters through RuvA and exits via RuvB. An RuvB hexamer assembles on each DNA strand where it exits the tetramer. Each RuvB hexamer is contacted by two RuvA subunits (via domain III) on 2 adjacent RuvB subunits; this complex drives branch migration. In the full resolvosome a probable DNA-RuvA(4)-RuvB(12)-RuvC(2) complex forms which resolves the HJ.

The protein resides in the cytoplasm. The enzyme catalyses ATP + H2O = ADP + phosphate + H(+). Functionally, the RuvA-RuvB-RuvC complex processes Holliday junction (HJ) DNA during genetic recombination and DNA repair, while the RuvA-RuvB complex plays an important role in the rescue of blocked DNA replication forks via replication fork reversal (RFR). RuvA specifically binds to HJ cruciform DNA, conferring on it an open structure. The RuvB hexamer acts as an ATP-dependent pump, pulling dsDNA into and through the RuvAB complex. RuvB forms 2 homohexamers on either side of HJ DNA bound by 1 or 2 RuvA tetramers; 4 subunits per hexamer contact DNA at a time. Coordinated motions by a converter formed by DNA-disengaged RuvB subunits stimulates ATP hydrolysis and nucleotide exchange. Immobilization of the converter enables RuvB to convert the ATP-contained energy into a lever motion, pulling 2 nucleotides of DNA out of the RuvA tetramer per ATP hydrolyzed, thus driving DNA branch migration. The RuvB motors rotate together with the DNA substrate, which together with the progressing nucleotide cycle form the mechanistic basis for DNA recombination by continuous HJ branch migration. Branch migration allows RuvC to scan DNA until it finds its consensus sequence, where it cleaves and resolves cruciform DNA. In Flavobacterium johnsoniae (strain ATCC 17061 / DSM 2064 / JCM 8514 / BCRC 14874 / CCUG 350202 / NBRC 14942 / NCIMB 11054 / UW101) (Cytophaga johnsonae), this protein is Holliday junction branch migration complex subunit RuvB.